The following is a 301-amino-acid chain: Acidic endochitinase (301 aa).

A signal peptide spans Met-1–Ala-25. In terms of domain architecture, GH18 spans Gly-26 to Val-301. Cystine bridges form between Cys-45/Cys-92 and Cys-75/Cys-82. Catalysis depends on Glu-152, which acts as the Proton donor. Cys-187 and Cys-216 are disulfide-bonded.

The protein belongs to the glycosyl hydrolase 18 family. Chitinase class II subfamily.

The enzyme catalyses Random endo-hydrolysis of N-acetyl-beta-D-glucosaminide (1-&gt;4)-beta-linkages in chitin and chitodextrins.. Defense against chitin containing fungal pathogens. In Vitis vinifera (Grape), this protein is Acidic endochitinase (CHIT3).